The chain runs to 4427 residues: Dynein axonemal heavy chain 2 (4427 aa).

A disordered region spans residues 1 to 73 (MSSKAEKKQR…AQSEESVEPE (73 aa)). Residues 1–1764 (MSSKAEKKQR…VIRQTNTQFQ (1764 aa)) form a stem region. Residues 14 to 23 (RGSSQASWSG) show a composition bias toward polar residues. Positions 50–59 (LPKEEPEPRL) are enriched in basic and acidic residues. Residues 1404-1439 (EDNQVALSTMKASRFVKAFEKDVDHWERCLSLILEV) form a TPR 1 repeat. 4 AAA regions span residues 1765–1986 (YNYE…LLRY), 2046–2273 (ETVE…DNCK), 2378–2625 (RYPP…VFQG), and 2722–2974 (EYNL…LRRH). ATP is bound by residues 1803-1810 (GPAGTGKT), 2084-2091 (GCTGSGKT), and 2416-2423 (GPVGTGKT). A TPR 2 repeat occupies 2721-2754 (NEYNLSPSVVPMQLVLFREAIEHITRIVRVIGQP). An ATP-binding site is contributed by 2762 to 2769 (GIGGSGRQ). Residues 2989–3272 (YKKLLGEKRQ…EELRKKSEEM (284 aa)) are stalk. The stretch at 3012 to 3049 (FKIDETREKVQVMSLELEDAKKKVAEFQKQCEEYLVII) forms a coiled coil. The stretch at 3072 to 3105 (VEEIKCQALADNAQKDLEEALPALEEAMRALESL) is one TPR 3 repeat. Coiled coils occupy residues 3216 to 3304 (KRIR…EEDL) and 3523 to 3567 (VRKE…GSLL). AAA regions lie at residues 3358–3588 (LCNP…EVTE) and 3804–4023 (VTSF…LLSL). TPR repeat units lie at residues 4072–4104 (STPF…LLPG) and 4105–4140 (MDPP…QPQI).

The protein belongs to the dynein heavy chain family. As to quaternary structure, part of the axonemal inner dynein arm complex that consists of at least two heavy chains and a number of intermediate and light chains. Interacts with DNAI4. In terms of tissue distribution, expressed primarily in trachea and testis, 2 tissues containing axonemal structures. Also expressed in lung. Expressed in spermatozoa (at protein level).

Its subcellular location is the cytoplasm. It localises to the cytoskeleton. The protein localises to the cilium axoneme. It is found in the flagellum axoneme. Its function is as follows. As part of the axonemal inner dynein arm complex plays a central role in ciliary beat. Expressed in sperm flagellum, it is required for sperm motility. Dyneins are microtubule-based molecular motors possessing ATPase activities that can convert the chemical energy of ATP into relative sliding between adjacent microtubule doublets to generate ciliary bending. In Homo sapiens (Human), this protein is Dynein axonemal heavy chain 2.